The following is a 444-amino-acid chain: Light-independent protochlorophyllide reductase subunit N (444 aa).

3 residues coordinate [4Fe-4S] cluster: Cys-36, Cys-61, and Cys-118.

Belongs to the BchN/ChlN family. In terms of assembly, protochlorophyllide reductase is composed of three subunits; BchL, BchN and BchB. Forms a heterotetramer of two BchB and two BchN subunits. The cofactor is [4Fe-4S] cluster.

The enzyme catalyses chlorophyllide a + oxidized 2[4Fe-4S]-[ferredoxin] + 2 ADP + 2 phosphate = protochlorophyllide a + reduced 2[4Fe-4S]-[ferredoxin] + 2 ATP + 2 H2O. The protein operates within porphyrin-containing compound metabolism; bacteriochlorophyll biosynthesis (light-independent). In terms of biological role, component of the dark-operative protochlorophyllide reductase (DPOR) that uses Mg-ATP and reduced ferredoxin to reduce ring D of protochlorophyllide (Pchlide) to form chlorophyllide a (Chlide). This reaction is light-independent. The NB-protein (BchN-BchB) is the catalytic component of the complex. The sequence is that of Light-independent protochlorophyllide reductase subunit N from Chloroflexus aurantiacus (strain ATCC 29366 / DSM 635 / J-10-fl).